A 235-amino-acid polypeptide reads, in one-letter code: MAQTLNRSLTDLGALLHLVDPTLPIGGFNHSNGLETFVQQRVVESKATLEEYVQTQLLQNWIYNDGAYLSLAFDAMCEGNFDRLCELDWQLSATKVARESREGSFKLGVRLLKIFIRYETHTLLTAYQQAIAEKRVQGYFPIVFAMVAQAMGLSKADTLYAFYYNAAVGVITNGVKLIPLSQMDGQDILFDLRGSLVQAVELSLDPDEEWLGAATLANDIRAMQHEVLYTRLYMS.

Belongs to the UreF family. UreD, UreF and UreG form a complex that acts as a GTP-hydrolysis-dependent molecular chaperone, activating the urease apoprotein by helping to assemble the nickel containing metallocenter of UreC. The UreE protein probably delivers the nickel.

The protein resides in the cytoplasm. Required for maturation of urease via the functional incorporation of the urease nickel metallocenter. This Haemophilus influenzae (strain ATCC 51907 / DSM 11121 / KW20 / Rd) protein is Urease accessory protein UreF.